Here is a 118-residue protein sequence, read N- to C-terminus: Protein YLR162W (118 aa).

Residues 1–20 (MQHTLTRTASLPERSSSAHS) are compositionally biased toward polar residues. The disordered stretch occupies residues 1-26 (MQHTLTRTASLPERSSSAHSAATALP). Residues 38–58 (LVPLLCIFWFVFVSMSPLPPA) traverse the membrane as a helical segment.

The protein resides in the membrane. Functionally, overexpression confers resistance to the antimicrobial peptide MiAMP1. The sequence is that of Protein YLR162W from Saccharomyces cerevisiae (strain ATCC 204508 / S288c) (Baker's yeast).